The following is a 174-amino-acid chain: Shikimate kinase 2 (174 aa).

ATP is bound at residue 12–17 (GAGKTT). 2 residues coordinate Mg(2+): threonine 16 and aspartate 32. 3 residues coordinate substrate: aspartate 34, arginine 58, and glycine 79. Residues 112–126 (AEDPEDAQRPSLTGK) form an LID domain region. Arginine 120 serves as a coordination point for ATP. Arginine 139 contributes to the substrate binding site. Residue glutamine 155 coordinates ATP.

This sequence belongs to the shikimate kinase family. AroL subfamily. In terms of assembly, monomer. Requires Mg(2+) as cofactor.

Its subcellular location is the cytoplasm. The catalysed reaction is shikimate + ATP = 3-phosphoshikimate + ADP + H(+). The protein operates within metabolic intermediate biosynthesis; chorismate biosynthesis; chorismate from D-erythrose 4-phosphate and phosphoenolpyruvate: step 5/7. Functionally, catalyzes the specific phosphorylation of the 3-hydroxyl group of shikimic acid using ATP as a cosubstrate. The protein is Shikimate kinase 2 of Yersinia enterocolitica serotype O:8 / biotype 1B (strain NCTC 13174 / 8081).